The following is a 952-amino-acid chain: UPF0182 protein SRU_2225 (952 aa).

Helical transmembrane passes span 12 to 32 (ILLG…GLVV), 52 to 72 (AQVL…GGNF), 109 to 129 (LGYV…SGRW), 168 to 188 (AVVG…VIAG), 207 to 227 (LGAN…LDLY), 247 to 267 (VVIP…GLVG), and 277 to 297 (LLGI…VLAP). The interval 917–952 (VPLPDTTGTVPPPTSSDTTGTMTAPTGDVSEVTGGS) is disordered. The span at 931-940 (SSDTTGTMTA) shows a compositional bias: polar residues.

It belongs to the UPF0182 family.

The protein resides in the cell membrane. The polypeptide is UPF0182 protein SRU_2225 (Salinibacter ruber (strain DSM 13855 / M31)).